The following is a 1643-amino-acid chain: Neurexin-3 (1643 aa).

An N-terminal signal peptide occupies residues Met-1–Gly-27. Positions Leu-28–Cys-202 constitute a Laminin G-like 1 domain. Residues Leu-28 to Thr-1568 are Extracellular-facing. N-linked (GlcNAc...) asparagine glycans are attached at residues Asn-58 and Asn-105. Residues Ala-198 to Ser-235 form the EGF-like 1 domain. Cystine bridges form between Cys-202/Cys-213, Cys-207/Cys-222, and Cys-224/Cys-234. Laminin G-like domains lie at Val-258–Cys-440 and Asp-447–Cys-639. Residues Asp-304, Leu-321, and Met-374 each contribute to the Ca(2+) site. Disulfide bonds link Cys-404–Cys-440, Cys-610–Cys-639, Cys-647–Cys-658, Cys-652–Cys-667, and Cys-669–Cys-679. The region spanning Ser-643–Glu-680 is the EGF-like 2 domain. Laminin G-like domains are found at residues Ile-685–Cys-857 and Asp-871–Cys-1046. Ca(2+)-binding residues include Asp-732 and Leu-749. N-linked (GlcNAc...) asparagine glycosylation is present at Asn-757. Arg-807 contacts Ca(2+). 4 disulfide bridges follow: Cys-1018-Cys-1046, Cys-1053-Cys-1064, Cys-1058-Cys-1073, and Cys-1075-Cys-1085. The 38-residue stretch at Pro-1049–Asn-1086 folds into the EGF-like 3 domain. The region spanning Ala-1090–Val-1260 is the Laminin G-like 6 domain. Positions 1142 and 1159 each coordinate Ca(2+). An N-linked (GlcNAc...) asparagine glycan is attached at Asn-1189. The Ca(2+) site is built by Ile-1211 and Asn-1213. N-linked (GlcNAc...) asparagine glycosylation is found at Asn-1257 and Asn-1301. The segment at Ala-1294–Ala-1318 is disordered. Residues Ser-1303 to Ala-1318 are compositionally biased toward polar residues. Ser-1317 is a glycosylation site (O-linked (Xyl...) (heparan sulfate) serine). Residues Gly-1569–Met-1589 form a helical membrane-spanning segment. At Tyr-1590–Val-1643 the chain is on the cytoplasmic side. The disordered stretch occupies residues Asn-1611–Val-1643.

It belongs to the neurexin family. The laminin G-like domain 2 binds to NXPH1. Specific isoforms bind to alpha-dystroglycan. The cytoplasmic C-terminal region binds to CASK. Specific isoforms bind neuroligins NLGN1, NLGN2 and NLGN3. Interacts with CLSTN3. O-glycosylated; contains heparan sulfate. Heparan sulfate attachment is required for synapse development by mediating interactions with neuroligins. In terms of tissue distribution, expressed in the blood vessel walls (at protein level). Highly expressed in brain, lung, and pancreas; a lower level of expression is detectable in heart, placenta, liver, and kidney, whereas no expression can be observed in skeletal muscle. Isoform 4a is heart-specific.

It is found in the presynaptic cell membrane. Functionally, neuronal cell surface protein that may be involved in cell recognition and cell adhesion. May mediate intracellular signaling. This chain is Neurexin-3 (NRXN3), found in Homo sapiens (Human).